The primary structure comprises 825 residues: Putative pentatricopeptide repeat-containing protein At2g01510 (825 aa).

PPR repeat units follow at residues 47 to 77 (DTCRSNFIVEDLLRRGQVSAARKVYDEMPHK), 78 to 108 (NTVSTNTMISGHVKTGDVSSARDLFDAMPDR), 109 to 143 (TVVTWTILMGWYARNSHFDEAFKLFRQMCRSSSCT), 146 to 180 (DHVTFTTLLPGCNDAVPQNAVGQVHAFAVKLGFDT), 183 to 213 (FLTVSNVLLKSYCEVRRLDLACVLFEEIPEK), 214 to 248 (DSVTFNTLITGYEKDGLYTESIHLFLKMRQSGHQP), 249 to 283 (SDFTFSGVLKAVVGLHDFALGQQLHALSVTTGFSR), 284 to 314 (DASVGNQILDFYSKHDRVLETRMLFDEMPEL), 315 to 349 (DFVSYNVVISSYSQADQYEASLHFFREMQCMGFDR), 350 to 384 (RNFPFATMLSIAANLSSLQMGRQLHCQALLATADS), 385 to 415 (ILHVGNSLVDMYAKCEMFEEAELIFKSLPQR), 416 to 450 (TTVSWTALISGYVQKGLHGAGLKLFTKMRGSNLRA), 451 to 485 (DQSTFATVLKASASFASLLLGKQLHAFIIRSGNLE), 486 to 516 (NVFSGSGLVDMYAKCGSIKDAVQVFEEMPDR), 517 to 551 (NAVSWNALISAHADNGDGEAAIGAFAKMIESGLQP), 552 to 587 (DSVSILGVLTACSHCGFVEQGTEYFQAMSPIYGITP), and 588 to 618 (KKKHYACMLDLLGRNGRFAEAEKLMDEMPFE). The type E motif stretch occupies residues 623 to 699 (MWSSVLNACR…VPAYSWVEVN (77 aa)). Residues 700–730 (HKIHVFSSNDQTHPNGDEIVRKINELTAEIE) form a type E(+) motif region. Residues 731 to 825 (REGYKPDTSS…EGVCSCGDYW (95 aa)) form a type DYW motif region.

The protein belongs to the PPR family. PCMP-H subfamily.

This chain is Putative pentatricopeptide repeat-containing protein At2g01510 (PCMP-H36), found in Arabidopsis thaliana (Mouse-ear cress).